We begin with the raw amino-acid sequence, 61 residues long: Large ribosomal subunit protein bL32 (61 aa).

The protein belongs to the bacterial ribosomal protein bL32 family.

This Syntrophus aciditrophicus (strain SB) protein is Large ribosomal subunit protein bL32.